The sequence spans 1045 residues: Bifunctional glutamine synthetase adenylyltransferase/adenylyl-removing enzyme (1045 aa).

The segment at 1 to 527 is adenylyl removase; the sequence is MSGPLRSERK…LHSQLFYRPL (527 aa). The segment at 533-1045 is adenylyl transferase; it reads NLSADAIRLS…GVDSMEQREF (513 aa).

This sequence belongs to the GlnE family. Requires Mg(2+) as cofactor.

It carries out the reaction [glutamine synthetase]-O(4)-(5'-adenylyl)-L-tyrosine + phosphate = [glutamine synthetase]-L-tyrosine + ADP. The enzyme catalyses [glutamine synthetase]-L-tyrosine + ATP = [glutamine synthetase]-O(4)-(5'-adenylyl)-L-tyrosine + diphosphate. Its function is as follows. Involved in the regulation of glutamine synthetase GlnA, a key enzyme in the process to assimilate ammonia. When cellular nitrogen levels are high, the C-terminal adenylyl transferase (AT) inactivates GlnA by covalent transfer of an adenylyl group from ATP to specific tyrosine residue of GlnA, thus reducing its activity. Conversely, when nitrogen levels are low, the N-terminal adenylyl removase (AR) activates GlnA by removing the adenylyl group by phosphorolysis, increasing its activity. The regulatory region of GlnE binds the signal transduction protein PII (GlnB) which indicates the nitrogen status of the cell. The sequence is that of Bifunctional glutamine synthetase adenylyltransferase/adenylyl-removing enzyme from Corynebacterium glutamicum (strain ATCC 13032 / DSM 20300 / JCM 1318 / BCRC 11384 / CCUG 27702 / LMG 3730 / NBRC 12168 / NCIMB 10025 / NRRL B-2784 / 534).